The following is a 378-amino-acid chain: MSALLNITEPNNNTNTKNDHFLASLTTDATQSTASKYSREQIAQLFDLPLMDLLLQAQTIHRQNFTANEVQISTLLSIKTGNCPEDCGYCSQSGHHRDKTELVAEKRIEVSKVIAAAKRAKATGSSRFCMGAAWKHPSAKDMPYVVELVKEVKALGLETCMTLGMLDTDQAAQLANAGLDYYNHNLDTSRSYYEQVVSTRSYDERLDTIANVRNSGINVCSGNIVGMGESRDDRIDWVHELLKMPKAPESIPVNLLVPIQGTPIGDKVLAEGQLSVLEWIRTIAVTRICCPSSYVRLSAGRESLSDAEQALAFMAGANSFFYGDKLLTTGNASQSGDDRLMRELGLTKQFSAPRLPKQVPVLDAMSGHQSQVILASLS.

The Radical SAM core domain occupies 68 to 292 (NEVQISTLLS…IAVTRICCPS (225 aa)). 3 residues coordinate [4Fe-4S] cluster: C83, C87, and C90. Residues C129, C160, C220, and R296 each coordinate [2Fe-2S] cluster.

It belongs to the radical SAM superfamily. Biotin synthase family. Homodimer. It depends on [4Fe-4S] cluster as a cofactor. The cofactor is [2Fe-2S] cluster.

The enzyme catalyses (4R,5S)-dethiobiotin + (sulfur carrier)-SH + 2 reduced [2Fe-2S]-[ferredoxin] + 2 S-adenosyl-L-methionine = (sulfur carrier)-H + biotin + 2 5'-deoxyadenosine + 2 L-methionine + 2 oxidized [2Fe-2S]-[ferredoxin]. It functions in the pathway cofactor biosynthesis; biotin biosynthesis; biotin from 7,8-diaminononanoate: step 2/2. Catalyzes the conversion of dethiobiotin (DTB) to biotin by the insertion of a sulfur atom into dethiobiotin via a radical-based mechanism. The polypeptide is Biotin synthase (Psychrobacter arcticus (strain DSM 17307 / VKM B-2377 / 273-4)).